The chain runs to 101 residues: NAD(P)H-quinone oxidoreductase subunit 4L, chloroplastic (101 aa).

The next 3 membrane-spanning stretches (helical) occupy residues 2–22 (MTEY…YGLI), 32–52 (MCLE…SDLF), and 61–81 (IFSI…PAIV).

Belongs to the complex I subunit 4L family. In terms of assembly, NDH is composed of at least 16 different subunits, 5 of which are encoded in the nucleus.

Its subcellular location is the plastid. The protein resides in the chloroplast thylakoid membrane. The catalysed reaction is a plastoquinone + NADH + (n+1) H(+)(in) = a plastoquinol + NAD(+) + n H(+)(out). It carries out the reaction a plastoquinone + NADPH + (n+1) H(+)(in) = a plastoquinol + NADP(+) + n H(+)(out). In terms of biological role, NDH shuttles electrons from NAD(P)H:plastoquinone, via FMN and iron-sulfur (Fe-S) centers, to quinones in the photosynthetic chain and possibly in a chloroplast respiratory chain. The immediate electron acceptor for the enzyme in this species is believed to be plastoquinone. Couples the redox reaction to proton translocation, and thus conserves the redox energy in a proton gradient. The polypeptide is NAD(P)H-quinone oxidoreductase subunit 4L, chloroplastic (Calycanthus floridus var. glaucus (Eastern sweetshrub)).